Reading from the N-terminus, the 964-residue chain is Syndetin (964 aa).

Residue Met1 is modified to N-acetylmethionine. A disordered region spans residues Met1–Ala25. Residue Ser15 is modified to Phosphoserine. Coiled coils occupy residues Leu81 to Leu107 and Tyr216 to Ile244. 4 positions are modified to phosphoserine: Ser494, Ser498, Ser559, and Ser561. Residues Asp532–Val563 form a disordered region. Residue Lys963 forms a Glycyl lysine isopeptide (Lys-Gly) (interchain with G-Cter in SUMO1); alternate linkage. Lys963 participates in a covalent cross-link: Glycyl lysine isopeptide (Lys-Gly) (interchain with G-Cter in SUMO2); alternate.

It belongs to the syndetin family. As to quaternary structure, component of the endosome-associated retrograde protein (EARP) complex, composed of VPS51, VPS52, VPS53 and VPS50/Syndetin. The EARP complex interacts with EIPR1. Interacts with VPS51 and VPS53 in an EIPR1-independent manner.

It is found in the recycling endosome. The protein resides in the membrane. Acts as a component of the EARP complex that is involved in endocytic recycling. The EARP complex associates with Rab4-positive endosomes and promotes recycling of internalized transferrin receptor (TFRC) to the plasma membrane. Within the EARP complex, required to tether the complex to recycling endosomes. Not involved in retrograde transport from early and late endosomes to the trans-Golgi network (TGN). This chain is Syndetin, found in Mus musculus (Mouse).